A 306-amino-acid polypeptide reads, in one-letter code: D-alanine--D-alanine ligase (306 aa).

In terms of domain architecture, ATP-grasp spans 101–301; it reads KKILAHAGLP…FPDLVEHLVR (201 aa). An ATP-binding site is contributed by 129 to 185; it reads VAELGLPVVVKAPTQGSSIGVYIVEREEDLEARITDAVAYGGTRVLVEKFIAGPELT. Mg(2+) contacts are provided by Asp256, Glu268, and Asn270.

Belongs to the D-alanine--D-alanine ligase family. Mg(2+) is required as a cofactor. It depends on Mn(2+) as a cofactor.

It localises to the cytoplasm. The enzyme catalyses 2 D-alanine + ATP = D-alanyl-D-alanine + ADP + phosphate + H(+). The protein operates within cell wall biogenesis; peptidoglycan biosynthesis. Functionally, cell wall formation. This chain is D-alanine--D-alanine ligase, found in Desulforudis audaxviator (strain MP104C).